Here is a 117-residue protein sequence, read N- to C-terminus: Large ribosomal subunit protein uL22 (117 aa).

Belongs to the universal ribosomal protein uL22 family. As to quaternary structure, part of the 50S ribosomal subunit.

Its function is as follows. This protein binds specifically to 23S rRNA; its binding is stimulated by other ribosomal proteins, e.g. L4, L17, and L20. It is important during the early stages of 50S assembly. It makes multiple contacts with different domains of the 23S rRNA in the assembled 50S subunit and ribosome. In terms of biological role, the globular domain of the protein is located near the polypeptide exit tunnel on the outside of the subunit, while an extended beta-hairpin is found that lines the wall of the exit tunnel in the center of the 70S ribosome. The protein is Large ribosomal subunit protein uL22 of Lactobacillus delbrueckii subsp. bulgaricus (strain ATCC 11842 / DSM 20081 / BCRC 10696 / JCM 1002 / NBRC 13953 / NCIMB 11778 / NCTC 12712 / WDCM 00102 / Lb 14).